The chain runs to 186 residues: Ribosome-recycling factor (186 aa).

Belongs to the RRF family.

Its subcellular location is the cytoplasm. Functionally, responsible for the release of ribosomes from messenger RNA at the termination of protein biosynthesis. May increase the efficiency of translation by recycling ribosomes from one round of translation to another. In Rickettsia akari (strain Hartford), this protein is Ribosome-recycling factor.